A 134-amino-acid polypeptide reads, in one-letter code: Profilin-2 (134 aa).

A disulfide bridge links C13 with C118. The short motif at 84–100 (AVTRGKKGTGGITIKKT) is the Involved in PIP2 interaction element. At T114 the chain carries Phosphothreonine.

It belongs to the profilin family. In terms of assembly, occurs in many kinds of cells as a complex with monomeric actin in a 1:1 ratio. In terms of processing, phosphorylated by MAP kinases.

The protein resides in the cytoplasm. It localises to the cytoskeleton. Its function is as follows. Binds to actin and affects the structure of the cytoskeleton. At high concentrations, profilin prevents the polymerization of actin, whereas it enhances it at low concentrations. The protein is Profilin-2 of Olea europaea (Common olive).